A 623-amino-acid chain; its full sequence is Protein EDS1L (623 aa).

At A2 the chain carries N-acetylalanine. The active-site Nucleophile is the S123. Catalysis depends on charge relay system residues D187 and H317.

As to quaternary structure, homodimer. Interacts with RPS4, RPS6, SNC1, SRFR1, AvrRps4 and HopA1. Interacts with PAD4 (via N-terminus). Interacts with SAG101. EDS1-SAG101 and EDS1-PAD4 form separate complexes in pathogen-unchallenged cells.

The protein localises to the nucleus. Its subcellular location is the cytoplasm. It is found in the microsome. In terms of biological role, positive regulator of basal resistance and of effector-triggered immunity specifically mediated by TIR-NB-LRR resistance proteins. Disruption by bacterial effector of EDS1-TIR-NB-LRR resistance protein interactions constitutes the first step in resistance activation. Triggers early plant defenses and hypersensitive response independently of PAD4, and then recruits PAD4 to potentiate plant defenses through the accumulation of salicylic acid. Nuclear localization is essential for basal and TIR-NB-LRR-conditioned immunity and for reprogramming defense gene expression, while cytoplasmic EDS1 is required to induce a complete immune response. Heterodimerization with PAD4 or SGA101 is necessary for TNL-mediated effector-triggered immunity. Contributes to nonhost resistance against E.amylovora. Has no direct lipase activity. The protein is Protein EDS1L of Arabidopsis thaliana (Mouse-ear cress).